A 130-amino-acid chain; its full sequence is Small ribosomal subunit protein uS11 (130 aa).

This sequence belongs to the universal ribosomal protein uS11 family. Part of the 30S ribosomal subunit. Interacts with proteins S7 and S18. Binds to IF-3.

Functionally, located on the platform of the 30S subunit, it bridges several disparate RNA helices of the 16S rRNA. Forms part of the Shine-Dalgarno cleft in the 70S ribosome. The sequence is that of Small ribosomal subunit protein uS11 from Xanthomonas oryzae pv. oryzae (strain MAFF 311018).